A 313-amino-acid polypeptide reads, in one-letter code: Ornithine carbamoyltransferase (313 aa).

Residues 57 to 60, glutamine 84, arginine 108, and 135 to 138 each bind carbamoyl phosphate; these read STRT and HPTQ. L-ornithine is bound by residues asparagine 167, aspartate 231, and 235-236; that span reads SM. Residues 272–273 and arginine 300 each bind carbamoyl phosphate; that span reads CL.

Belongs to the aspartate/ornithine carbamoyltransferase superfamily. OTCase family.

The protein resides in the cytoplasm. It carries out the reaction carbamoyl phosphate + L-ornithine = L-citrulline + phosphate + H(+). The protein operates within amino-acid biosynthesis; L-arginine biosynthesis; L-arginine from L-ornithine and carbamoyl phosphate: step 1/3. Reversibly catalyzes the transfer of the carbamoyl group from carbamoyl phosphate (CP) to the N(epsilon) atom of ornithine (ORN) to produce L-citrulline. This Pseudothermotoga lettingae (strain ATCC BAA-301 / DSM 14385 / NBRC 107922 / TMO) (Thermotoga lettingae) protein is Ornithine carbamoyltransferase.